The primary structure comprises 333 residues: MLVLGIESTAHTFSIGIVKDGKILSQLGKTYIPPSGAGIHPREAAEHHARHAPAILRQLLDMLGLALSDVDVVAYAAGPGLGPALRIGAVLARALAIKLGIPLVPVHHGVAHIEVARYTTNACDPLVVLVSGGHTVITGYSDGRYRVFGETLDVAIGNAIDVFAREVGLGFPGVPAVEKCAEAADTVVAFPMPIIGQDLSYAGLVTHALQLVKSGTPLPVVCKSLIETAYYMLAEVVERALAYTKKKEVVVAGGVARSKRLREILSAASGEHDAVVKIVPDEYAGDNGAMIALTGYYAYKHGIYTTPEQSFVKQRWRLDNVDVPWFYDLCNPH.

Fe cation is bound by residues His108 and His112. Residues 129–133 (LVSGG), Asp161, Glu178, and Ser258 each bind substrate. Asp286 provides a ligand contact to Fe cation.

It belongs to the KAE1 / TsaD family. It depends on Fe(2+) as a cofactor.

Its subcellular location is the cytoplasm. It catalyses the reaction L-threonylcarbamoyladenylate + adenosine(37) in tRNA = N(6)-L-threonylcarbamoyladenosine(37) in tRNA + AMP + H(+). Functionally, required for the formation of a threonylcarbamoyl group on adenosine at position 37 (t(6)A37) in tRNAs that read codons beginning with adenine. Is probably involved in the transfer of the threonylcarbamoyl moiety of threonylcarbamoyl-AMP (TC-AMP) to the N6 group of A37. This Pyrobaculum islandicum (strain DSM 4184 / JCM 9189 / GEO3) protein is tRNA N6-adenosine threonylcarbamoyltransferase.